The sequence spans 816 residues: Sodium/hydrogen exchanger 1 (816 aa).

Residues 1–98 (MLLWSAVRGL…FPVLGIDYTH (98 aa)) lie on the Extracellular side of the membrane. Polar residues predominate over residues 37 to 50 (LQLSPTDSTTPDSQ). Residues 37–79 (LQLSPTDSTTPDSQPSRERSIGDVTTAPPEVTPESRPVNRSVT) are disordered. Asn-75 is a glycosylation site (N-linked (GlcNAc...) asparagine). The helical transmembrane segment at 99-121 (VRTPFEISLWILLACLMKIGFHV) threads the bilayer. Over 122 to 130 (IPTISSIVP) the chain is Cytoplasmic. Residues 131–148 (ESCLLIVVGLLVGGLIKG) form a helical membrane-spanning segment. Topologically, residues 149 to 158 (VGEKPPFLQS) are extracellular. The chain crosses the membrane as a helical span at residues 159-176 (EVFFLFLLPPIILDAGYF). The Cytoplasmic segment spans residues 177–186 (LPLRQFTENL). The chain crosses the membrane as a helical span at residues 187–215 (GTILIFAVVGTLWNAFFLGGLMYAVCLVG). Residues 216–222 (GEQINNI) are Extracellular-facing. The helical transmembrane segment at 223 to 249 (GLLDNLLFGSIISAVDPVAVLAVFEEI) threads the bilayer. The Cytoplasmic portion of the chain corresponds to 250–252 (HIN). A helical membrane pass occupies residues 253–283 (ELLHILVFGESLLNDAVTVVLYHLFEEFANY). Residues 284–287 (DHVG) lie on the Extracellular side of the membrane. The helical transmembrane segment at 288–322 (IVDIVLGFLSFFVVALGGVFVGVVYGVIAAFTSRF) threads the bilayer. Residues 323 to 328 (TAHIRV) are Cytoplasmic-facing. The chain crosses the membrane as a helical span at residues 329–341 (IEPLFVFLYSYMA). Residues 342 to 350 (YLSAELFHL) lie on the Extracellular side of the membrane. Residues 351–371 (SGIMALIASGVVMRPYVEANI) form a helical membrane-spanning segment. Over 372 to 373 (SH) the chain is Cytoplasmic. The helical transmembrane segment at 374-404 (KSHTTIKYFLKMWSSVSETLIFIFLGVSTVA) threads the bilayer. Residues 405–410 (GSHHWN) are Extracellular-facing. A helical transmembrane segment spans residues 411-438 (WTFVISTLLFCLIARVLGVLGLTWFINK). Residues 439 to 444 (FRIVKL) are Cytoplasmic-facing. A helical membrane pass occupies residues 445-469 (TPKDQFIIAYGGLRGAIAFSLGYLL). The Extracellular portion of the chain corresponds to 470-475 (DKKHFP). A helical transmembrane segment spans residues 476–505 (MCDLFLTAIITVIFFTVFVQGMTIRPLVDL). The interaction with TESC stretch occupies residues 503-545 (VDLLAVKKKQETKRSINEEIHTQFLDHLLTGIEDICGHYGHHH). The Cytoplasmic segment spans residues 506 to 816 (LAVKKKQETK…EGEPFIPKGQ (311 aa)). The PI(4,5)P2-binding region stretch occupies residues 509–516 (KKKQETKR). The interaction with CHP2 stretch occupies residues 515 to 545 (KRSINEEIHTQFLDHLLTGIEDICGHYGHHH). The interval 540–545 (HYGHHH) is confers pH-dependent PI(4,5)P2 binding. A PI(4,5)P2-binding region region spans residues 552–560 (RFNKKYVKK). Residues Ser-599 and Ser-602 each carry the phosphoserine modification. Phosphothreonine is present on Thr-603. A phosphoserine mark is found at Ser-605 and Ser-648. The interval 633–816 (KILRNNLQKT…EGEPFIPKGQ (184 aa)) is interaction with TESC. Residues 633–816 (KILRNNLQKT…EGEPFIPKGQ (184 aa)) form an interaction with CALM1 region. The segment at 684 to 687 (LTVP) is interaction with PPP3CA. A phosphoserine mark is found at Ser-693, Ser-697, and Ser-703. The segment at 715–720 (PVITID) is interaction with PPP3CA. Phosphoserine is present on residues Ser-723, Ser-726, Ser-729, Ser-786, Ser-788, and Ser-797. Residues 748–816 (PRVAEEAAEE…EGEPFIPKGQ (69 aa)) form a disordered region. Polar residues predominate over residues 783–792 (PSDSPSSQRM).

The protein belongs to the monovalent cation:proton antiporter 1 (CPA1) transporter (TC 2.A.36) family. In terms of assembly, homodimer; dimerization is crucial for its function. Oligomer. Interacts with CALM in a calcium-dependent manner. Interacts with TESC. Interacts (via the juxtamembrane region of the cytoplasmic C-terminal domain) with CHP1; the interaction occurs at the plasma membrane in a calcium-dependent manner. Interacts with CHP2; the interaction occurs in a calcium-dependent manner. Interacts with EZR; regulates the cytoskeletal interactions of SLC9A1 and promotes stress fiber formation. In terms of processing, ubiquitinated, leading to its degradation by the proteasome. Ubiquitination is reduced by CHP1. O-glycosylated. Post-translationally, palmitoylated; may play a major role in SLC9A1 regulation. In terms of processing, phosphorylation at Ser-648 by AKT1 reduces SLC9A1 binding to CALM1. Kidney and intestine.

The protein localises to the cell membrane. Its subcellular location is the basolateral cell membrane. The catalysed reaction is Na(+)(in) + H(+)(out) = Na(+)(out) + H(+)(in). The enzyme catalyses Li(+)(out) + H(+)(in) = Li(+)(in) + H(+)(out). It carries out the reaction Li(+)(in) + Na(+)(out) = Li(+)(out) + Na(+)(in). With respect to regulation, activated at acidic pHs. Inhibited by cariporide and eniporide. Phosphatidylinositol 4,5-bisphosphate (PI(4,5)P2) and phosphatidylinositol 3,4,5-trisphosphate (PI(3,4,5)P3) bind and differentially regulate SLC9A1 activity. Functionally, electroneutral Na(+) /H(+) antiporter that extrudes Na(+) in exchange for external protons driven by the inward sodium ion chemical gradient, protecting cells from acidification that occurs from metabolism. Exchanges intracellular H(+) ions for extracellular Na(+) in 1:1 stoichiometry. Plays a key role in maintening intracellular pH neutral and cell volume, and thus is important for cell growth, proliferation, migration and survival. In addition, can transport lithium Li(+) and functions also as a Na(+)/Li(+) antiporter. SLC9A1 also functions in membrane anchoring and organization of scaffolding complexes that coordinate signaling inputs. The sequence is that of Sodium/hydrogen exchanger 1 (SLC9A1) from Oryctolagus cuniculus (Rabbit).